A 938-amino-acid polypeptide reads, in one-letter code: Isoleucine--tRNA ligase (938 aa).

Positions 58 to 68 (PYANGSIHIGH) match the 'HIGH' region motif. Glu-561 provides a ligand contact to L-isoleucyl-5'-AMP. Positions 602 to 606 (KMSKS) match the 'KMSKS' region motif. Lys-605 is an ATP binding site. The Zn(2+) site is built by Cys-901, Cys-904, Cys-921, and Cys-924.

The protein belongs to the class-I aminoacyl-tRNA synthetase family. IleS type 1 subfamily. In terms of assembly, monomer. Requires Zn(2+) as cofactor.

It is found in the cytoplasm. The enzyme catalyses tRNA(Ile) + L-isoleucine + ATP = L-isoleucyl-tRNA(Ile) + AMP + diphosphate. Its function is as follows. Catalyzes the attachment of isoleucine to tRNA(Ile). As IleRS can inadvertently accommodate and process structurally similar amino acids such as valine, to avoid such errors it has two additional distinct tRNA(Ile)-dependent editing activities. One activity is designated as 'pretransfer' editing and involves the hydrolysis of activated Val-AMP. The other activity is designated 'posttransfer' editing and involves deacylation of mischarged Val-tRNA(Ile). This chain is Isoleucine--tRNA ligase, found in Sodalis glossinidius (strain morsitans).